Consider the following 60-residue polypeptide: Acidic phospholipase A2 (60 aa).

Ca(2+)-binding residues include tyrosine 27, glycine 29, and glycine 31. An intrachain disulfide couples cysteine 28 to cysteine 44. Histidine 47 is a catalytic residue. Aspartate 48 contributes to the Ca(2+) binding site.

The protein belongs to the phospholipase A2 family. Group II subfamily. D49 sub-subfamily. As to quaternary structure, monomer. The cofactor is Ca(2+). Expressed by the venom gland.

It localises to the secreted. It catalyses the reaction a 1,2-diacyl-sn-glycero-3-phosphocholine + H2O = a 1-acyl-sn-glycero-3-phosphocholine + a fatty acid + H(+). Snake venom phospholipase A2 (PLA2) that exhibits an indirect hemolytic activity, a low myotoxicity, and induces edema. In addition, this enzyme has been shown to induce the release of some pro- and anti-inflammatory cytokines from human PBMC (IL12B, TNF-alpha, IL1B and IL6 but not variation has been observed for IL-8 and IL-10). PLA2 catalyzes the calcium-dependent hydrolysis of the 2-acyl groups in 3-sn-phosphoglycerides. The polypeptide is Acidic phospholipase A2 (Bothrops leucurus (Whitetail lancehead)).